The sequence spans 514 residues: Putative thymidine phosphorylase (514 aa).

The protein belongs to the thymidine/pyrimidine-nucleoside phosphorylase family. Type 2 subfamily.

The catalysed reaction is thymidine + phosphate = 2-deoxy-alpha-D-ribose 1-phosphate + thymine. The protein is Putative thymidine phosphorylase of Rhodopseudomonas palustris (strain ATCC BAA-98 / CGA009).